We begin with the raw amino-acid sequence, 231 residues long: Phosphatidate cytidylyltransferase (231 aa).

The next 6 membrane-spanning stretches (helical) occupy residues 33–53 (FVVA…LVAI), 67–87 (IMYL…LIFL), 95–115 (WLIM…MIGG), 133–153 (WSGL…ISFI), 167–187 (IYLF…DLFI), and 206–226 (HGGV…LFFI).

The protein belongs to the CDS family.

The protein resides in the cell membrane. It catalyses the reaction a 1,2-diacyl-sn-glycero-3-phosphate + CTP + H(+) = a CDP-1,2-diacyl-sn-glycerol + diphosphate. It functions in the pathway phospholipid metabolism; CDP-diacylglycerol biosynthesis; CDP-diacylglycerol from sn-glycerol 3-phosphate: step 3/3. In Rickettsia bellii (strain RML369-C), this protein is Phosphatidate cytidylyltransferase (cdsA).